The primary structure comprises 290 residues: 33 kDa chaperonin (290 aa).

Intrachain disulfides connect C235–C237 and C268–C271.

Belongs to the HSP33 family. Under oxidizing conditions two disulfide bonds are formed involving the reactive cysteines. Under reducing conditions zinc is bound to the reactive cysteines and the protein is inactive.

The protein resides in the cytoplasm. Functionally, redox regulated molecular chaperone. Protects both thermally unfolding and oxidatively damaged proteins from irreversible aggregation. Plays an important role in the bacterial defense system toward oxidative stress. The protein is 33 kDa chaperonin of Streptococcus equi subsp. equi (strain 4047).